Consider the following 93-residue polypeptide: Cobalt transport protein CbiN (93 aa).

2 consecutive transmembrane segments (helical) span residues 5-25 (LILLAMVIALVILPFFIDHGG) and 62-82 (SLLFTLQGSLGAAVIFYILGY).

The protein belongs to the CbiN family. In terms of assembly, forms an energy-coupling factor (ECF) transporter complex composed of an ATP-binding protein (A component, CbiO), a transmembrane protein (T component, CbiQ) and 2 possible substrate-capture proteins (S components, CbiM and CbiN) of unknown stoichimetry.

It localises to the cell inner membrane. It participates in cofactor biosynthesis; adenosylcobalamin biosynthesis. Its function is as follows. Part of the energy-coupling factor (ECF) transporter complex CbiMNOQ involved in cobalt import. In Citrobacter koseri (strain ATCC BAA-895 / CDC 4225-83 / SGSC4696), this protein is Cobalt transport protein CbiN.